A 314-amino-acid polypeptide reads, in one-letter code: Basic endochitinase (314 aa).

The N-terminal stretch at Met-1–Ala-20 is a signal peptide. The 41-residue stretch at Glu-21–Ser-61 folds into the Chitin-binding type-1 domain. Cystine bridges form between Cys-23–Cys-38, Cys-32–Cys-44, Cys-37–Cys-51, Cys-55–Cys-59, Cys-86–Cys-148, Cys-160–Cys-168, and Cys-267–Cys-299. Catalysis depends on Glu-130, which acts as the Proton donor.

The protein belongs to the glycosyl hydrolase 19 family. Chitinase class I subfamily.

It catalyses the reaction Random endo-hydrolysis of N-acetyl-beta-D-glucosaminide (1-&gt;4)-beta-linkages in chitin and chitodextrins.. Its function is as follows. Defense against chitin-containing fungal pathogens. This chain is Basic endochitinase (CHIT1B), found in Vitis vinifera (Grape).